Consider the following 987-residue polypeptide: Ephrin type-B receptor 2 (987 aa).

The first 19 residues, 1-19, serve as a signal peptide directing secretion; that stretch reads MGPLWFCCLPLALLPLLAA. Residues 20 to 544 lie on the Extracellular side of the membrane; the sequence is VEETLMDSTT…QTSVQEKLPL (525 aa). The region spanning 21–203 is the Eph LBD domain; it reads EETLMDSTTA…FYRKCPRVIQ (183 aa). 2 disulfides stabilise this stretch: cysteine 63/cysteine 185 and cysteine 98/cysteine 108. Asparagine 266, asparagine 337, asparagine 429, asparagine 478, and asparagine 483 each carry an N-linked (GlcNAc...) asparagine glycan. Fibronectin type-III domains are found at residues 325–435 and 436–531; these read IPSA…TNQA and APSA…TMTE. The chain crosses the membrane as a helical span at residues 545-565; it reads IIGSSAAGLVFLIAVVVIIIV. Residues 566–987 are Cytoplasmic-facing; it reads CNRRGFERAD…QMNQIQSVEV (422 aa). Positions 622-885 constitute a Protein kinase domain; that stretch reads VKIEQVIGAG…QIVNTLDKMI (264 aa). Residues 628–636 and lysine 654 each bind ATP; that span reads IGAGEFGEV. Aspartate 747 (proton acceptor) is an active-site residue. Lysine 892 is covalently cross-linked (Glycyl lysine isopeptide (Lys-Gly) (interchain with G-Cter in ubiquitin)). An SAM domain is found at 914–978; that stretch reads TSFNTVDEWL…LNSIQVMRAQ (65 aa). Residues 985–987 carry the PDZ-binding motif; it reads VEV.

The protein belongs to the protein kinase superfamily. Tyr protein kinase family. Ephrin receptor subfamily. As to quaternary structure, heterotetramer upon binding of the ligand. The heterotetramer is composed of an ephrin dimer and a receptor dimer. Oligomerization is probably required to induce biological responses. Ligand binding induces cleavage by matrix metalloproteinases (MMPs) such as MMP7/MMP9, producing an EphB2/N-terminal fragment (NTF) and a C-terminal long fragment (EphB2-LF). EphB2-LF is further cleaved by MMPs, producing EphB2/CTF1 which is further cleaved by the PS1/gamma-secretase producing EphB2/CTF2. In terms of processing, polyubiquitinated; ligand binding stimulates ubiquitination. Ubiquitinated by RNF186 at Lys-892, mainly through 'Lys-27'-linked polyubiquitin chains.

The protein localises to the cell membrane. Its subcellular location is the cell projection. It is found in the axon. The protein resides in the dendrite. It carries out the reaction L-tyrosyl-[protein] + ATP = O-phospho-L-tyrosyl-[protein] + ADP + H(+). Its function is as follows. Receptor tyrosine kinase which binds promiscuously transmembrane ephrin-B family ligands residing on adjacent cells, leading to contact-dependent bidirectional signaling into neighboring cells. The signaling pathway downstream of the receptor is referred to as forward signaling while the signaling pathway downstream of the ephrin ligand is referred to as reverse signaling. Functions in axon guidance during development. In addition to axon guidance, also regulates dendritic spines development and maturation and stimulates the formation of excitatory synapses. The polypeptide is Ephrin type-B receptor 2 (EPHB2) (Coturnix japonica (Japanese quail)).